Consider the following 78-residue polypeptide: Large ribosomal subunit protein bL28 (78 aa).

Belongs to the bacterial ribosomal protein bL28 family.

In Thermosynechococcus vestitus (strain NIES-2133 / IAM M-273 / BP-1), this protein is Large ribosomal subunit protein bL28.